The primary structure comprises 106 residues: Thioredoxin-2 (106 aa).

Residues 1-106 form the Thioredoxin domain; that stretch reads MVYQVKDKAD…RLEDVIKANI (106 aa). Active-site nucleophile residues include Cys32 and Cys35. A disulfide bond links Cys32 and Cys35.

The protein belongs to the thioredoxin family. In terms of assembly, monomer.

Its function is as follows. Participates in various redox reactions through the reversible oxidation of its active center dithiol to a disulfide and catalyzes dithiol-disulfide exchange reactions. As a reducing substrate of peroxiredoxin 1, thioredoxin 2 is preferred over thioredoxin 1. In Drosophila melanogaster (Fruit fly), this protein is Thioredoxin-2.